We begin with the raw amino-acid sequence, 678 residues long: DNA ligase (678 aa).

NAD(+) is bound by residues 47–51 (DSDYD), 96–97 (SL), and E122. K124 acts as the N6-AMP-lysine intermediate in catalysis. NAD(+)-binding residues include R145, E182, K300, and K324. Zn(2+) is bound by residues C418, C421, C436, and C442. In terms of domain architecture, BRCT spans 602–678 (AHNESFTNKT…IFEEDLQNLL (77 aa)).

Belongs to the NAD-dependent DNA ligase family. LigA subfamily. Requires Mg(2+) as cofactor. Mn(2+) serves as cofactor.

The enzyme catalyses NAD(+) + (deoxyribonucleotide)n-3'-hydroxyl + 5'-phospho-(deoxyribonucleotide)m = (deoxyribonucleotide)n+m + AMP + beta-nicotinamide D-nucleotide.. In terms of biological role, DNA ligase that catalyzes the formation of phosphodiester linkages between 5'-phosphoryl and 3'-hydroxyl groups in double-stranded DNA using NAD as a coenzyme and as the energy source for the reaction. It is essential for DNA replication and repair of damaged DNA. This chain is DNA ligase, found in Francisella philomiragia subsp. philomiragia (strain ATCC 25017 / CCUG 19701 / FSC 153 / O#319-036).